The sequence spans 443 residues: GTPase Der (443 aa).

2 consecutive EngA-type G domains span residues 3-167 and 176-349; these read PTLV…PEPE and VRVA…AAAM. GTP is bound by residues 9-16, 56-60, 119-122, 182-189, 229-233, and 294-297; these read GRPNVGKS, DTGGF, NKAE, DTAGM, and NKWD. In terms of domain architecture, KH-like spans 350 to 434; the sequence is AKMTTPRLTR…PLRIQFVTAK (85 aa).

It belongs to the TRAFAC class TrmE-Era-EngA-EngB-Septin-like GTPase superfamily. EngA (Der) GTPase family. In terms of assembly, associates with the 50S ribosomal subunit.

Functionally, GTPase that plays an essential role in the late steps of ribosome biogenesis. The protein is GTPase Der of Dechloromonas aromatica (strain RCB).